A 574-amino-acid chain; its full sequence is K(+)/H(+) antiporter NhaP2 (574 aa).

13 helical membrane-spanning segments follow: residues 6-26, 34-54, 58-78, 87-107, 109-129, 173-193, 196-216, 219-239, 242-262, 271-291, 299-319, 335-355, and 359-379; these read INSF…LSPM, ILLI…GGIL, YSTA…DGGM, VALW…TSIT, VMAA…GAIV, IAIL…ISFI, FGLG…LVNV, LAEG…YATS, LGGS…NKPT, VLDG…GLLL, IWLP…PLAV, WFIS…VFPM, and LPGA…SLLV. The RCK C-terminal domain occupies 405-486; sequence SGVEIYPKSE…LEALSNLFSQ (82 aa).

It belongs to the monovalent cation:proton antiporter 1 (CPA1) transporter (TC 2.A.36) family. NhaP2 subfamily.

The protein resides in the cell inner membrane. The enzyme catalyses K(+)(in) + H(+)(out) = K(+)(out) + H(+)(in). Functionally, k(+)/H(+) antiporter that extrudes potassium in exchange for external protons and maintains the internal concentration of potassium under toxic levels. The polypeptide is K(+)/H(+) antiporter NhaP2 (Shewanella oneidensis (strain ATCC 700550 / JCM 31522 / CIP 106686 / LMG 19005 / NCIMB 14063 / MR-1)).